The sequence spans 1093 residues: Semaphorin-5B (1093 aa).

An N-terminal signal peptide occupies residues 1–19 (MVVPGPLALSLLLSSLTLL). Residues 20–978 (VSHLSSSQDI…TSCGGFNLIH (959 aa)) are Extracellular-facing. One can recognise a Sema domain in the interval 45–495 (HPIVAFEDLK…LSDRVLRVPL (451 aa)). N-linked (GlcNAc...) asparagine glycans are attached at residues N59 and N95. Disulfide bonds link C114–C124 and C141–C150. 3 N-linked (GlcNAc...) asparagine glycosylation sites follow: N157, N178, and N287. 2 cysteine pairs are disulfide-bonded: C264/C367 and C288/C330. N333, N378, N532, N539, N547, and N602 each carry an N-linked (GlcNAc...) asparagine glycan. TSP type-1 domains lie at 551 to 605 (DGGF…NCSR), 606 to 662 (NGAW…TPCP), 664 to 713 (PIFW…EACP), 721 to 776 (WTPW…ACDT), 795 to 850 (NGGW…QACP), 852 to 907 (RGAW…QACP), and 908 to 952 (EGWS…RPCP). Intrachain disulfides connect C618–C655, C622–C661, C633–C645, C676–C707, C680–C712, and C691–C697. N728 is a glycosylation site (N-linked (GlcNAc...) asparagine). Disulfide bonds link C807–C844, C811–C849, C822–C834, C864–C901, C868–C906, and C879–C891. Residue N944 is glycosylated (N-linked (GlcNAc...) asparagine). A helical transmembrane segment spans residues 979 to 999 (LIVTGVSCFLVSGLLTLAVYL). Topologically, residues 1000–1093 (SCQHCQRQSQ…SPGQRCFPNS (94 aa)) are cytoplasmic.

The protein belongs to the semaphorin family. In adult, only detected in brain.

Its subcellular location is the membrane. In terms of biological role, may act as a positive axonal guidance cue. This is Semaphorin-5B (Sema5b) from Mus musculus (Mouse).